The sequence spans 264 residues: Thymidylate synthase (264 aa).

Arg-21 contacts dUMP. (6R)-5,10-methylene-5,6,7,8-tetrahydrofolate is bound at residue His-51. Residue 126 to 127 coordinates dUMP; the sequence is RR. The active-site Nucleophile is Cys-146. DUMP contacts are provided by residues 166–169, Asn-177, and 207–209; these read RSCD and HLY. Asp-169 provides a ligand contact to (6R)-5,10-methylene-5,6,7,8-tetrahydrofolate. Ala-263 lines the (6R)-5,10-methylene-5,6,7,8-tetrahydrofolate pocket.

Belongs to the thymidylate synthase family. Bacterial-type ThyA subfamily. In terms of assembly, homodimer.

It is found in the cytoplasm. It catalyses the reaction dUMP + (6R)-5,10-methylene-5,6,7,8-tetrahydrofolate = 7,8-dihydrofolate + dTMP. It participates in pyrimidine metabolism; dTTP biosynthesis. In terms of biological role, catalyzes the reductive methylation of 2'-deoxyuridine-5'-monophosphate (dUMP) to 2'-deoxythymidine-5'-monophosphate (dTMP) while utilizing 5,10-methylenetetrahydrofolate (mTHF) as the methyl donor and reductant in the reaction, yielding dihydrofolate (DHF) as a by-product. This enzymatic reaction provides an intracellular de novo source of dTMP, an essential precursor for DNA biosynthesis. The sequence is that of Thymidylate synthase from Pectobacterium atrosepticum (strain SCRI 1043 / ATCC BAA-672) (Erwinia carotovora subsp. atroseptica).